We begin with the raw amino-acid sequence, 299 residues long: MLFDQIARNKRKTWLLLLVFFLLLGLVGYGVGYLWLGSGFGGMILALVIGFIYAVTMIFQSTNVVMAMNGAREVDEQTAPNLYHVVEDMAMVAQIPMPRVFIVDDPSMNAFATGSSPKNAAVAATTGLLAVMNREELEGVIGHEVSHIRNYDIRISTIAVALASAITMLAVMARNMMFWGGGRRRNDDDRNGSSGLEIILLIISLIAIILAPLAATLVQLAISRQREFLADASSVELTRNPQGMINALLKLDNSAPMQHHVDDASAALFINDPKKESGLQKLFYTHPPISERVERLKQM.

The next 2 helical transmembrane spans lie at 14–34 (WLLLLVFFLLLGLVGYGVGYL) and 39–59 (GFGGMILALVIGFIYAVTMIF). Residue His143 coordinates Zn(2+). Residue Glu144 is part of the active site. His147 contributes to the Zn(2+) binding site. The next 2 membrane-spanning stretches (helical) occupy residues 153–173 (IRISTIAVALASAITMLAVMA) and 198–218 (IILLIISLIAIILAPLAATLV). Glu227 serves as a coordination point for Zn(2+).

This sequence belongs to the peptidase M48B family. The cofactor is Zn(2+).

It localises to the cell membrane. This is Protease HtpX homolog from Streptococcus thermophilus (strain CNRZ 1066).